The primary structure comprises 808 residues: MSKLSFRARALDAAKPLPIYRGKDMPDLNDCVSINRAVPQMPTGMEKEEESEHHLQRAISAQQVFREKKESMVIPVPEAESNVNYYNRLYKGEFKQPKQFIHIQPFNLDNEQPDYDMDSEDETLLNRLNRKMEIKPLQFEIMIDRLEKASSNQLVTLQEAKLLLNEDDYLIKAVYDYWVRKRKNCRGPSLIPQIKQEKRDGSTNNDPYVAFRRRTEKMQTRKNRKNDEASYEKMLKLRREFSRAITILEMIKRREKTKRELLHLTLEVVEKRYHLGDYGGEILNEVKVNRSEKELYASPATLHNGNHHKVQECKTKHPHHLSLKEEASDVVRQKKKYPKKPKAEAGIAPQQPTPETLPVINKSDIKQYDFQSSDEDEFPQVLSPASEAEEENDPDGSCAFRRRAGCQYYAPRLDQANNHMCENSELADLDKLRYKHCLTTLTVPRRCIGFARRRIGRGGRVIMDRISTEHDPVLKQIDPEMLNGFSSSSQTIDFSSNFSRTNASSKPCENRLSLSEILSNIRSCRLQCFQPRLLNVQDIDSEECTSRKPGQTVSSKRVSAASVALLNTSKNGISVTGGITEEQFQTHQQQLVQMQRQQLAQLHQKQQSQHSSQQTHPKAQGSSTSDCMSKTLDSASAHFAASAVVSAPVPSRSEGSKEQNTGHNNMNGVVQPSGPSKTLYSTNMALSSSPGISAVQLVRTVGHTTTNHLIPALCTSSPQTLPMNNSCLTNAVHLNNVSVVSPVNVHINTRTSAPSPTALKLATVAASMDRVPKVTPSSAISSIARENHEPERLGLNGLAETTVAMEVT.

Glycyl lysine isopeptide (Lys-Gly) (interchain with G-Cter in SUMO2) cross-links involve residues K135, K195, and K324. The tract at residues 337–357 (YPKKPKAEAGIAPQQPTPETL) is disordered. K362 is covalently cross-linked (Glycyl lysine isopeptide (Lys-Gly) (interchain with G-Cter in SUMO2)). Disordered regions lie at residues 371-397 (QSSD…PDGS), 595-630 (QRQQ…CMSK), and 645-682 (VSAP…LYST). Low complexity predominate over residues 595–614 (QRQQLAQLHQKQQSQHSSQQ). 2 stretches are compositionally biased toward polar residues: residues 615 to 630 (THPK…CMSK) and 658 to 682 (EQNT…LYST). S755 carries the post-translational modification Phosphoserine.

It belongs to the enhancer of polycomb family.

It is found in the nucleus. Its function is as follows. May play a role in transcription or DNA repair. This chain is Enhancer of polycomb homolog 2 (Epc2), found in Mus musculus (Mouse).